The chain runs to 378 residues: SWI/SNF-related matrix-associated actin-dependent regulator of chromatin subfamily B member 1 (378 aa).

The DNA-binding stretch occupies residues 1 to 106 (MIMALSKTFG…DEKYKAVSIS (106 aa)).

It belongs to the SNF5 family. In terms of assembly, component of the multiprotein chromatin-remodeling complexes SWI/SNF. Component of neural progenitors-specific chromatin remodeling complex (npBAF complex) and the neuron-specific chromatin remodeling complex (nBAF complex). Component of the BAF (SWI/SNF) chromatin remodeling complex. Component of the SWI/SNF-B (PBAF) chromatin remodeling complex. Binds to double-stranded DNA.

The protein resides in the nucleus. Functionally, involved in chromatin-remodeling. Core component of the BAF (SWI/SNF) complex. This ATP-dependent chromatin-remodeling complex plays important roles in cell proliferation and differentiation, in cellular antiviral activities and inhibition of tumor formation. Belongs to the neural progenitors-specific chromatin remodeling complex (npBAF complex) and the neuron-specific chromatin remodeling complex (nBAF complex) and may play a role in neural development. This chain is SWI/SNF-related matrix-associated actin-dependent regulator of chromatin subfamily B member 1 (smarcb1), found in Xenopus tropicalis (Western clawed frog).